Reading from the N-terminus, the 281-residue chain is MPADIMEKNSSSPVAATPASVNTTPDKPKTASEHRKSSKPIMEKRRRARINESLSQLKTLILDALKKDSSRHSKLEKADILEMTVKHLRNLQRAQMTAALSTDPSVLGKYRAGFSECMNEVTRFLSTCEGVNTEVRTRLLGHLANCMTQINAMTYPGQAHPALQAPPPPPPSGPGGPQHAPFAPPPPLVPIPGGAAPPPGSAPCKLGSQAGEAAKVFGGFQVVPAPDGQFAFLIPNGAFAHSGPVIPVYTSNSGTSVGPNAVSPSSGSSLTADSMWRPWRN.

A disordered region spans residues 1-44 (MPADIMEKNSSSPVAATPASVNTTPDKPKTASEHRKSSKPIMEK). A compositionally biased stretch (low complexity) spans 10–21 (SSSPVAATPASV). Residues 26–35 (DKPKTASEHR) show a composition bias toward basic and acidic residues. The bHLH domain maps to 34 to 91 (HRKSSKPIMEKRRRARINESLSQLKTLILDALKKDSSRHSKLEKADILEMTVKHLRNL). Residues 110-143 (YRAGFSECMNEVTRFLSTCEGVNTEVRTRLLGHL) form the Orange domain. 2 disordered regions span residues 158–206 (QAHP…PCKL) and 255–281 (TSVG…PWRN). Pro residues-rich tracts occupy residues 164 to 174 (QAPPPPPPSGP) and 182 to 201 (FAPP…PPGS). The segment covering 255 to 272 (TSVGPNAVSPSSGSSLTA) has biased composition (polar residues). The WRPW motif signature appears at 276–279 (WRPW).

In terms of assembly, interacts with SIRT1. Interacts weakly with TLE2. Interacts with HES6. Transcription repression requires formation of a complex with a corepressor protein of the Groucho/TLE family. Interacts (via WPRW motif) with TLE1. Interacts with an FA complex, composed of FANCA, FANCF, FANCG and FANCL, but not of FANCC, nor FANCE. In terms of tissue distribution, present in all tissues examined but highest in epithelial cells and in mesoderm-derived tissues such as embryonal muscle cells.

It localises to the nucleus. In terms of biological role, transcriptional repressor of genes that require a bHLH protein for their transcription. May act as a negative regulator of myogenesis by inhibiting the functions of MYOD1 and ASH1. Binds DNA on N-box motifs: 5'-CACNAG-3' with high affinity and on E-box motifs: 5'-CANNTG-3' with low affinity. May play a role in a functional FA core complex response to DNA cross-link damage, being required for the stability and nuclear localization of FA core complex proteins, as well as for FANCD2 monoubiquitination in response to DNA damage. The sequence is that of Transcription factor HES-1 (Hes1) from Rattus norvegicus (Rat).